We begin with the raw amino-acid sequence, 288 residues long: 4-diphosphocytidyl-2-C-methyl-D-erythritol kinase (288 aa).

Lys11 is an active-site residue. 100–110 is a binding site for ATP; sequence PTSAGLGSGSS. Asp140 is a catalytic residue.

This sequence belongs to the GHMP kinase family. IspE subfamily.

The enzyme catalyses 4-CDP-2-C-methyl-D-erythritol + ATP = 4-CDP-2-C-methyl-D-erythritol 2-phosphate + ADP + H(+). It participates in isoprenoid biosynthesis; isopentenyl diphosphate biosynthesis via DXP pathway; isopentenyl diphosphate from 1-deoxy-D-xylulose 5-phosphate: step 3/6. Functionally, catalyzes the phosphorylation of the position 2 hydroxy group of 4-diphosphocytidyl-2C-methyl-D-erythritol. The chain is 4-diphosphocytidyl-2-C-methyl-D-erythritol kinase from Wolbachia sp. subsp. Brugia malayi (strain TRS).